A 179-amino-acid chain; its full sequence is Large ribosomal subunit protein uL5 (179 aa).

This sequence belongs to the universal ribosomal protein uL5 family. In terms of assembly, part of the 50S ribosomal subunit; part of the 5S rRNA/L5/L18/L25 subcomplex. Contacts the 5S rRNA and the P site tRNA. Forms a bridge to the 30S subunit in the 70S ribosome.

Functionally, this is one of the proteins that bind and probably mediate the attachment of the 5S RNA into the large ribosomal subunit, where it forms part of the central protuberance. In the 70S ribosome it contacts protein S13 of the 30S subunit (bridge B1b), connecting the 2 subunits; this bridge is implicated in subunit movement. Contacts the P site tRNA; the 5S rRNA and some of its associated proteins might help stabilize positioning of ribosome-bound tRNAs. The sequence is that of Large ribosomal subunit protein uL5 from Chromobacterium violaceum (strain ATCC 12472 / DSM 30191 / JCM 1249 / CCUG 213 / NBRC 12614 / NCIMB 9131 / NCTC 9757 / MK).